Reading from the N-terminus, the 128-residue chain is Sirohydrochlorin cobaltochelatase (128 aa).

His9 functions as the Proton acceptor in the catalytic mechanism. His9 is a Co(2+) binding site. Residues Lys43 and 68 to 73 (FATGTH) contribute to the substrate site. His73 is a binding site for Co(2+).

It belongs to the CbiX family. CbiXS subfamily. In terms of assembly, homotetramer; dimer of dimers.

The enzyme catalyses Co-sirohydrochlorin + 2 H(+) = sirohydrochlorin + Co(2+). Its pathway is cofactor biosynthesis; adenosylcobalamin biosynthesis; cob(II)yrinate a,c-diamide from sirohydrochlorin (anaerobic route): step 1/10. Its function is as follows. Catalyzes the insertion of Co(2+) into sirohydrochlorin as part of the anaerobic pathway to cobalamin biosynthesis. The protein is Sirohydrochlorin cobaltochelatase of Saccharolobus islandicus (strain Y.N.15.51 / Yellowstone #2) (Sulfolobus islandicus).